A 1246-amino-acid chain; its full sequence is MLVLHFNLYEAQILPHERLATSVFLEHGPLQVTSFNPTTTTGYVVYVNSPNASFLEPVLSKLFQSVSPKLPFFKFSEQTLSFSYGPHLQGSQTTFSKDLVDVVKNLSMFTPQGPENAFTVERIEYYRTIHIICDLKDPKKRHIRHLQKMLCNPYTGLTNFVIPQDKRLEMDVLDAESAVSAPLSDPLWTMSNGLFNLLGYSSQYSVFKRGAAPKVFVEKNSRLAISMNIDYWNPWSSTNMLYDGLHAIEKGLIYSFGSFTPTPSLTSVFNMAQHWYVPMFSACQIGHVMQLPLQTHELSLTGSLPMKMLQAHLNLLKCSSMPHIQGFFRLVPKDLSHILPQTKIYNGFISTSLCLQTINMANEHPLQDKTYLYQLGNFFTYHKQFLTCQESGKEIGSILTALAFFLDSVKTYPGTIVGMSTSLPVASMKAKLAAVCQQVCGARLLVSALPPQVVAKLAPFSPSNRVENKKMLKQYFFNLLTSDLIIAIKNVNIDAQAALKTACYMAGCRFKKIGLLTHLKGTEVVDNTVERPYPILRFDRFKPKFPLLSSPTSITFLEERINWQDLNLRDTILKILEHPSVGCKEFIVNHTDKLISGRVARTSIVGPWQLPVSDYSILVPMHPCTTEEVRENPWDYETDIDSHCVFEEAAVAGICSAIGESTILTQADLKVGTIRAITEAILNLSMVPWNNIGNIVIQLSITLPYTAHVSTYLQLVMETAKTFCEALRVSCTFTANATEGGASIVASAIVNTLDVSKCITPDLKFNNSFLFLLTTEKDYSLFGSVAQQILEKTFIGEIPSATSPVMLKKMLSVLQTLIKDESVVSGHDVSDGGLVATVAEMALSGGKGVRVYVPHGEDAIKFLCSETPGVVIEVQGSKMYYVQQFLHSENINFQIIGESTSSLTFSISQNLTKLVHEPLELFKSAWRSFSDACEPCQIHPRPYRMQIATVPKYCPVGPCRFHTVIVYLLPNNSVPHGLLNAIEEAGFQPRLVSIHQPSKTTNVYDPHTVWGFFIVGASNVQDEDVGMRALIAQLKSHVAFQRDLRTMLAKPDVFSVAIGALACELLFYNKAIGYNKPSDTYMTCVKNSSRKFESRWSNIYIPESTKAIAFQSLKNSLIPCWTQGTHLKFYHPKPMLEKMEESGMVSSMFYGHSLSSGPAQNYPLTPNGENAIAGVCSADGRHLALLHDPSLCNNLWQWPYVPLENPPLKVSPWKTMFLDLHKWGITVQGASPPPSRTSDPLRSFVF.

Its subcellular location is the virion tegument. In Saimiri sciureus (Common squirrel monkey), this protein is Probable membrane antigen 3 (3).